Reading from the N-terminus, the 307-residue chain is Glutathione synthetase (307 aa).

One can recognise an ATP-grasp domain in the interval 120–304 (KLGALRFSRW…LADQTIERLR (185 aa)). 146 to 202 (AREQGDVVLKPLGGRAGLGVIRVQAEAPGLKALLELVTEQERLPVMAQRFLPDVTEG) contributes to the ATP binding site. Residues Glu275 and Asn277 each contribute to the Mg(2+) site.

Belongs to the prokaryotic GSH synthase family. The cofactor is Mg(2+). Mn(2+) serves as cofactor.

It catalyses the reaction gamma-L-glutamyl-L-cysteine + glycine + ATP = glutathione + ADP + phosphate + H(+). It participates in sulfur metabolism; glutathione biosynthesis; glutathione from L-cysteine and L-glutamate: step 2/2. The protein is Glutathione synthetase of Parasynechococcus marenigrum (strain WH8102).